A 116-amino-acid polypeptide reads, in one-letter code: Mercuric transport protein MerT (116 aa).

2 helical membrane-spanning segments follow: residues 16–36 (LAAI…ALGF) and 46–66 (VLEP…FFAW). Hg(2+) contacts are provided by C24 and C25. Hg(2+) contacts are provided by C76 and C82. Residues 94 to 114 (IFWGVAVLVLVALGFPYVVPF) form a helical membrane-spanning segment.

The protein belongs to the MerT family.

It localises to the cell inner membrane. Involved in mercury resistance. Probably transfers a mercuric ion from the periplasmic Hg(2+)-binding protein MerP to the cytoplasmic mercuric reductase MerA. In Pseudomonas fluorescens, this protein is Mercuric transport protein MerT.